Here is a 238-residue protein sequence, read N- to C-terminus: Phosphoribosylaminoimidazole-succinocarboxamide synthase (238 aa).

This sequence belongs to the SAICAR synthetase family.

The enzyme catalyses 5-amino-1-(5-phospho-D-ribosyl)imidazole-4-carboxylate + L-aspartate + ATP = (2S)-2-[5-amino-1-(5-phospho-beta-D-ribosyl)imidazole-4-carboxamido]succinate + ADP + phosphate + 2 H(+). It functions in the pathway purine metabolism; IMP biosynthesis via de novo pathway; 5-amino-1-(5-phospho-D-ribosyl)imidazole-4-carboxamide from 5-amino-1-(5-phospho-D-ribosyl)imidazole-4-carboxylate: step 1/2. The chain is Phosphoribosylaminoimidazole-succinocarboxamide synthase from Marinomonas sp. (strain MWYL1).